The primary structure comprises 270 residues: Putative carbamate hydrolase RutD (270 aa).

Belongs to the AB hydrolase superfamily. Hydrolase RutD family.

The catalysed reaction is carbamate + 2 H(+) = NH4(+) + CO2. In terms of biological role, involved in pyrimidine catabolism. May facilitate the hydrolysis of carbamate, a reaction that can also occur spontaneously. The chain is Putative carbamate hydrolase RutD from Escherichia coli (strain SMS-3-5 / SECEC).